The chain runs to 147 residues: Lysozyme C-3 (147 aa).

The N-terminal stretch at 1–18 is a signal peptide; sequence MKALIILGFLFLSVAVQG. Residues 19–147 form the C-type lysozyme domain; the sequence is KVFERCELAR…VSSYVQGCTL (129 aa). 4 disulfides stabilise this stretch: C24–C145, C48–C133, C83–C99, and C95–C113. Catalysis depends on residues E53 and D71.

Belongs to the glycosyl hydrolase 22 family. Monomer. Stomach-specific.

The enzyme catalyses Hydrolysis of (1-&gt;4)-beta-linkages between N-acetylmuramic acid and N-acetyl-D-glucosamine residues in a peptidoglycan and between N-acetyl-D-glucosamine residues in chitodextrins.. Its function is as follows. Lysozymes have primarily a bacteriolytic function; those in tissues and body fluids are associated with the monocyte-macrophage system and enhance the activity of immunoagents. The polypeptide is Lysozyme C-3 (LYZ3) (Bos taurus (Bovine)).